Reading from the N-terminus, the 252-residue chain is Uracil-DNA glycosylase (252 aa).

Aspartate 87 serves as the catalytic Proton acceptor.

Belongs to the uracil-DNA glycosylase (UDG) superfamily. UNG family.

It is found in the host nucleus. It catalyses the reaction Hydrolyzes single-stranded DNA or mismatched double-stranded DNA and polynucleotides, releasing free uracil.. Its function is as follows. Excises uracil residues from the DNA which can arise as a result of misincorporation of dUMP residues by DNA polymerase or deamination of cytosines. Therefore may reduce deleterious uracil incorporation into the viral genome, particularly in terminally differentiated cells which lack DNA repair enzymes. This chain is Uracil-DNA glycosylase (46), found in Alcelaphine herpesvirus 1 (strain C500) (AlHV-1).